Reading from the N-terminus, the 274-residue chain is Formamidopyrimidine-DNA glycosylase (274 aa).

Residue P2 is the Schiff-base intermediate with DNA of the active site. The active-site Proton donor is the E3. K60 functions as the Proton donor; for beta-elimination activity in the catalytic mechanism. The DNA site is built by H93 and R112. An FPG-type zinc finger spans residues 240 to 274; that stretch reads FVYGRKGEPCKRCGTPIEKTVVAGRGTHYCPRCQR. The Proton donor; for delta-elimination activity role is filled by R264.

This sequence belongs to the FPG family. In terms of assembly, monomer. The cofactor is Zn(2+).

The catalysed reaction is Hydrolysis of DNA containing ring-opened 7-methylguanine residues, releasing 2,6-diamino-4-hydroxy-5-(N-methyl)formamidopyrimidine.. The enzyme catalyses 2'-deoxyribonucleotide-(2'-deoxyribose 5'-phosphate)-2'-deoxyribonucleotide-DNA = a 3'-end 2'-deoxyribonucleotide-(2,3-dehydro-2,3-deoxyribose 5'-phosphate)-DNA + a 5'-end 5'-phospho-2'-deoxyribonucleoside-DNA + H(+). Functionally, involved in base excision repair of DNA damaged by oxidation or by mutagenic agents. Acts as a DNA glycosylase that recognizes and removes damaged bases. Has a preference for oxidized purines, such as 7,8-dihydro-8-oxoguanine (8-oxoG). Has AP (apurinic/apyrimidinic) lyase activity and introduces nicks in the DNA strand. Cleaves the DNA backbone by beta-delta elimination to generate a single-strand break at the site of the removed base with both 3'- and 5'-phosphates. The protein is Formamidopyrimidine-DNA glycosylase of Geobacillus kaustophilus (strain HTA426).